The primary structure comprises 341 residues: L-threonine 3-dehydrogenase (341 aa).

Cys-38 provides a ligand contact to Zn(2+). Active-site charge relay system residues include Thr-40 and His-43. Residues His-63, Glu-64, Cys-93, Cys-96, Cys-99, and Cys-107 each contribute to the Zn(2+) site. Residues Ile-175, Asp-195, Arg-200, 262 to 264, and 286 to 287 each bind NAD(+); these read LGI and IY.

It belongs to the zinc-containing alcohol dehydrogenase family. As to quaternary structure, homotetramer. Requires Zn(2+) as cofactor.

It localises to the cytoplasm. It carries out the reaction L-threonine + NAD(+) = (2S)-2-amino-3-oxobutanoate + NADH + H(+). It participates in amino-acid degradation; L-threonine degradation via oxydo-reductase pathway; glycine from L-threonine: step 1/2. In terms of biological role, catalyzes the NAD(+)-dependent oxidation of L-threonine to 2-amino-3-ketobutyrate. The polypeptide is L-threonine 3-dehydrogenase (Cronobacter sakazakii (strain ATCC BAA-894) (Enterobacter sakazakii)).